Reading from the N-terminus, the 300-residue chain is MLLFFCIFVVFLCVLNFFTSNVLVWWSVFLLMTVVFVCLSKGSGSYVGILNYFVIQESLGLFFLVFNVFLLQFFIVMMKVGVAPFHFWVFSVTGSLYDWLLMWFLTFQKLPFLPVLVQLFDFSAFFIFLFGICVCYFQLFVLKGYKSMMVISSTESFNWVVLTCFLSVVNVIYLFFYYVVLMAFLMPNFNVKDFNFVNWEVLLVFLNVPFSVSFFIKIFVLSEVFKLDGLFLLFLLLMMFLSMLCFSLWLVNMSVKNMKMLGDNFKVLFFLVFPMMVFSVIYYFSKILLCRLDKAEFFLK.

The next 9 membrane-spanning stretches (helical) occupy residues 4 to 24, 29 to 49, 58 to 78, 87 to 107, 122 to 142, 165 to 185, 201 to 221, 231 to 251, and 267 to 287; these read FFCI…NVLV, FLLM…YVGI, SLGL…IVMM, FWVF…FLTF, FSAF…LFVL, FLSV…MAFL, VLLV…IFVL, FLLF…LWLV, and VLFF…FSKI.

It belongs to the complex I subunit 2 family.

It localises to the mitochondrion inner membrane. It carries out the reaction a ubiquinone + NADH + 5 H(+)(in) = a ubiquinol + NAD(+) + 4 H(+)(out). Functionally, core subunit of the mitochondrial membrane respiratory chain NADH dehydrogenase (Complex I) that is believed to belong to the minimal assembly required for catalysis. Complex I functions in the transfer of electrons from NADH to the respiratory chain. The immediate electron acceptor for the enzyme is believed to be ubiquinone. In Ascaris suum (Pig roundworm), this protein is NADH-ubiquinone oxidoreductase chain 2 (ND2).